A 335-amino-acid polypeptide reads, in one-letter code: NAC domain-containing protein 40 (335 aa).

The region spanning 14-156 (LFPGFRFSPT…ALVVCRLRKN (143 aa)) is the NAC domain. Residues 112–162 (VGTKRTLVFHIGRAPRGERTEWIMHEYCIHGAPQDALVVCRLRKNADFRAS) mediate DNA binding. A compositionally biased stretch (polar residues) spans 245–254 (PTNPTHQETI). The disordered stretch occupies residues 245-267 (PTNPTHQETISSESSSKRSKCGI). A helical transmembrane segment spans residues 313–333 (VLATTVFLAILFSFFWTVLIA).

Proteolytically cleaved, probably by metalloprotease activity. This cleavage mediates a translocation from the plasma membrane to the nucleus. In terms of tissue distribution, expressed in seeds, leaves, roots and inflorescence. Expressed in roots, rosette leaves, cauline leaves, shoot apex, stems and flowers.

It localises to the cell membrane. Its subcellular location is the nucleus. Its function is as follows. Transcriptional activator activated by proteolytic cleavage through regulated intramembrane proteolysis (RIP), probably via metalloprotease activity. Regulates gibberellic acid-mediated salt-responsive repression of seed germination and flowering via FT, thus delaying seed germination under high salinity conditions. This chain is NAC domain-containing protein 40, found in Arabidopsis thaliana (Mouse-ear cress).